The sequence spans 121 residues: NAD(P)H-quinone oxidoreductase subunit 3, chloroplastic (121 aa).

A run of 3 helical transmembrane segments spans residues 10–30 (FWAF…VSNL), 65–85 (MFAL…PWAM), and 90–110 (LGII…IGLI).

This sequence belongs to the complex I subunit 3 family. As to quaternary structure, NDH is composed of at least 16 different subunits, 5 of which are encoded in the nucleus.

The protein resides in the plastid. Its subcellular location is the chloroplast thylakoid membrane. It carries out the reaction a plastoquinone + NADH + (n+1) H(+)(in) = a plastoquinol + NAD(+) + n H(+)(out). It catalyses the reaction a plastoquinone + NADPH + (n+1) H(+)(in) = a plastoquinol + NADP(+) + n H(+)(out). In terms of biological role, NDH shuttles electrons from NAD(P)H:plastoquinone, via FMN and iron-sulfur (Fe-S) centers, to quinones in the photosynthetic chain and possibly in a chloroplast respiratory chain. The immediate electron acceptor for the enzyme in this species is believed to be plastoquinone. Couples the redox reaction to proton translocation, and thus conserves the redox energy in a proton gradient. The sequence is that of NAD(P)H-quinone oxidoreductase subunit 3, chloroplastic from Staurastrum punctulatum (Green alga).